The following is a 244-amino-acid chain: NAD-dependent protein deacetylase (244 aa).

Residues Met1 to Asp244 form the Deacetylase sirtuin-type domain. Ala24, Thr28, Phe35, Arg36, Gln105, Ile107, Asp108, and His123 together coordinate NAD(+). Phe35 contacts nicotinamide. Residues Ile107 and Asp108 each contribute to the nicotinamide site. His123 serves as the catalytic Proton acceptor. Positions 131, 134, 152, and 155 each coordinate Zn(2+). Thr193, Ser194, Asn217, and Ile235 together coordinate NAD(+).

The protein belongs to the sirtuin family. Class U subfamily. Zn(2+) serves as cofactor.

Its subcellular location is the cytoplasm. It carries out the reaction N(6)-acetyl-L-lysyl-[protein] + NAD(+) + H2O = 2''-O-acetyl-ADP-D-ribose + nicotinamide + L-lysyl-[protein]. NAD-dependent protein deacetylase which modulates the activities of several enzymes which are inactive in their acetylated form. The protein is NAD-dependent protein deacetylase of Clostridium perfringens (strain 13 / Type A).